Here is a 780-residue protein sequence, read N- to C-terminus: Pendrin (780 aa).

At 1-87 the chain is on the cytoplasmic side; that stretch reads MAAPGGRSEP…YRVKEWLLSD (87 aa). A helical transmembrane segment spans residues 88-108; it reads VISGVSTGLVATLQGMAYALL. A topological domain (extracellular) is located at residue Ala-109. A helical transmembrane segment spans residues 110-130; the sequence is AVPVGYGLYSAFFPILTYFIF. At 131-135 the chain is on the cytoplasmic side; it reads GTSRH. Residues 136-156 traverse the membrane as a helical segment; the sequence is ISVGPFPVVSLMVGSVVLSMA. At 157-191 the chain is on the extracellular side; that stretch reads PDEHFLVSSSNGTVLNTTMIDTAARDTARVLIASA. Residues 192 to 212 traverse the membrane as a helical segment; the sequence is LTLLVGIIQLIFGGLQIGFIV. Over 213–218 the chain is Cytoplasmic; it reads RYLADP. A helical membrane pass occupies residues 219-239; that stretch reads LVGGFTTAAAFQVLVSQLKIV. Topologically, residues 240–263 are extracellular; sequence LNVSTKNYNGVLSIIYTLVEIFQN. The helical transmembrane segment at 264-284 threads the bilayer; that stretch reads IGDTNLADFTAGLLTIVVCMA. Residues 285 to 295 are Cytoplasmic-facing; it reads VKELNDRFRHK. A helical membrane pass occupies residues 296-316; sequence IPVPIPIEVIVTIIATAISYG. The Extracellular segment spans residues 317 to 344; sequence ANLEKNYNAGIVKSIPRGFLPPELPPVS. The helical transmembrane segment at 345–365 threads the bilayer; the sequence is LFSEMLAASFSIAVVAYAIAV. Residues 366-384 lie on the Cytoplasmic side of the membrane; it reads SVGKVYATKYDYTIDGNQE. A helical membrane pass occupies residues 385-405; sequence FIAFGISNIFSGFFSCFVATT. Topologically, residues 406–421 are extracellular; it reads ALSRTAVQESTGGKTQ. Residues 422–442 traverse the membrane as a helical segment; the sequence is VAGIISAAIVMIAILALGKLL. Residues 443 to 448 are Cytoplasmic-facing; it reads EPLQKS. Residues 449–469 traverse the membrane as a helical segment; that stretch reads VLAAVVIANLKGMFMQLCDIP. At 470 to 486 the chain is on the extracellular side; it reads RLWRQNKIDAVIWVFTC. The chain crosses the membrane as a helical span at residues 487–507; the sequence is IVSIILGLDLGLLAGLIFGLL. The Cytoplasmic segment spans residues 508 to 780; that stretch reads TVVLRVQFPS…QDEAMRTLAS (273 aa). The STAS domain maps to 535–729; it reads NYKNIEEPQG…LTVHDAILYL (195 aa).

Belongs to the SLC26A/SulP transporter (TC 2.A.53) family. As to quaternary structure, interacts with IQGAP1; this interaction enhances the chloride-bicarbonate exchange activity of SLC26A4. In terms of tissue distribution, highly expressed in the kidney (at protein level). High expression in adult thyroid, lower expression in adult and fetal kidney and fetal brain. Not expressed in other tissues.

It localises to the cell membrane. The protein resides in the apical cell membrane. The enzyme catalyses chloride(in) = chloride(out). It carries out the reaction iodide(out) = iodide(in). The catalysed reaction is hydrogencarbonate(in) + chloride(out) = hydrogencarbonate(out) + chloride(in). It catalyses the reaction iodide(in) + hydrogencarbonate(out) = iodide(out) + hydrogencarbonate(in). The enzyme catalyses iodide(in) + chloride(out) = iodide(out) + chloride(in). It carries out the reaction formate(in) + chloride(out) = formate(out) + chloride(in). Sodium-independent transporter of chloride and iodide. Mediates electroneutral chloride-bicarbonate, chloride-iodide and chloride-formate exchange with 1:1 stoichiometry. Mediates electroneutral iodide-bicarbonate exchange. The chain is Pendrin (SLC26A4) from Homo sapiens (Human).